Consider the following 98-residue polypeptide: Putative septation protein SpoVG (98 aa).

This sequence belongs to the SpoVG family.

Essential for sporulation. Interferes with or is a negative regulator of the pathway leading to asymmetric septation. This Shouchella clausii (strain KSM-K16) (Alkalihalobacillus clausii) protein is Putative septation protein SpoVG.